Reading from the N-terminus, the 84-residue chain is Putative UPF0320 protein YNL337W (84 aa).

This sequence belongs to the UPF0320 family.

In Saccharomyces cerevisiae (strain ATCC 204508 / S288c) (Baker's yeast), this protein is Putative UPF0320 protein YNL337W.